Consider the following 612-residue polypeptide: Dihydroxy-acid dehydratase (612 aa).

Aspartate 81 lines the Mg(2+) pocket. Cysteine 122 provides a ligand contact to [2Fe-2S] cluster. Residues aspartate 123 and lysine 124 each contribute to the Mg(2+) site. Lysine 124 bears the N6-carboxylysine mark. Position 195 (cysteine 195) interacts with [2Fe-2S] cluster. Position 491 (glutamate 491) interacts with Mg(2+). Catalysis depends on serine 517, which acts as the Proton acceptor.

This sequence belongs to the IlvD/Edd family. Homodimer. The cofactor is [2Fe-2S] cluster. It depends on Mg(2+) as a cofactor.

The enzyme catalyses (2R)-2,3-dihydroxy-3-methylbutanoate = 3-methyl-2-oxobutanoate + H2O. It carries out the reaction (2R,3R)-2,3-dihydroxy-3-methylpentanoate = (S)-3-methyl-2-oxopentanoate + H2O. Its pathway is amino-acid biosynthesis; L-isoleucine biosynthesis; L-isoleucine from 2-oxobutanoate: step 3/4. The protein operates within amino-acid biosynthesis; L-valine biosynthesis; L-valine from pyruvate: step 3/4. Functionally, functions in the biosynthesis of branched-chain amino acids. Catalyzes the dehydration of (2R,3R)-2,3-dihydroxy-3-methylpentanoate (2,3-dihydroxy-3-methylvalerate) into 2-oxo-3-methylpentanoate (2-oxo-3-methylvalerate) and of (2R)-2,3-dihydroxy-3-methylbutanoate (2,3-dihydroxyisovalerate) into 2-oxo-3-methylbutanoate (2-oxoisovalerate), the penultimate precursor to L-isoleucine and L-valine, respectively. This chain is Dihydroxy-acid dehydratase, found in Bartonella henselae (strain ATCC 49882 / DSM 28221 / CCUG 30454 / Houston 1) (Rochalimaea henselae).